We begin with the raw amino-acid sequence, 379 residues long: UPF0754 membrane protein ABC1518 (379 aa).

Helical transmembrane passes span 1 to 21 (MHWI…GAAT) and 358 to 378 (LLGG…VHFF).

Belongs to the UPF0754 family.

It localises to the cell membrane. This Shouchella clausii (strain KSM-K16) (Alkalihalobacillus clausii) protein is UPF0754 membrane protein ABC1518.